Reading from the N-terminus, the 181-residue chain is Ferritin (181 aa).

A Ferritin-like diiron domain is found at 6–155 (RHNYHEDCEP…NLITRLKRAG (150 aa)). Fe cation contacts are provided by E23, E58, H61, E103, and Q137.

This sequence belongs to the ferritin family. As to quaternary structure, oligomer of 12 or 24 subunits. The functional molecule is roughly spherical and contains a central cavity into which the polymeric mineral iron core is deposited. Post-translationally, the N-terminus is blocked.

Its subcellular location is the cytoplasm. The catalysed reaction is 4 Fe(2+) + O2 + 4 H(+) = 4 Fe(3+) + 2 H2O. Functionally, stores iron in a soluble, non-toxic, readily available form. Important for iron homeostasis. Has ferroxidase activity. Iron is taken up in the ferrous form and deposited as ferric hydroxides after oxidation. The sequence is that of Ferritin from Pacifastacus leniusculus (Signal crayfish).